Here is a 244-residue protein sequence, read N- to C-terminus: uncharacterized protein (244 aa).

A run of 2 helical transmembrane segments spans residues 29–49 (WIPW…TQHM) and 139–159 (LGMK…ATVI).

Belongs to the FMP10 family.

It localises to the mitochondrion membrane. This is an uncharacterized protein from Saccharomyces cerevisiae (strain ATCC 204508 / S288c) (Baker's yeast).